A 361-amino-acid chain; its full sequence is UDP-N-acetylglucosamine--N-acetylmuramyl-(pentapeptide) pyrophosphoryl-undecaprenol N-acetylglucosamine transferase (361 aa).

Residues S199 and Q290 each coordinate UDP-N-acetyl-alpha-D-glucosamine.

Belongs to the glycosyltransferase 28 family. MurG subfamily.

It localises to the cell membrane. It carries out the reaction Mur2Ac(oyl-L-Ala-gamma-D-Glu-L-Lys-D-Ala-D-Ala)-di-trans,octa-cis-undecaprenyl diphosphate + UDP-N-acetyl-alpha-D-glucosamine = beta-D-GlcNAc-(1-&gt;4)-Mur2Ac(oyl-L-Ala-gamma-D-Glu-L-Lys-D-Ala-D-Ala)-di-trans,octa-cis-undecaprenyl diphosphate + UDP + H(+). Its pathway is cell wall biogenesis; peptidoglycan biosynthesis. In terms of biological role, cell wall formation. Catalyzes the transfer of a GlcNAc subunit on undecaprenyl-pyrophosphoryl-MurNAc-pentapeptide (lipid intermediate I) to form undecaprenyl-pyrophosphoryl-MurNAc-(pentapeptide)GlcNAc (lipid intermediate II). The sequence is that of UDP-N-acetylglucosamine--N-acetylmuramyl-(pentapeptide) pyrophosphoryl-undecaprenol N-acetylglucosamine transferase from Streptococcus mutans serotype c (strain ATCC 700610 / UA159).